A 211-amino-acid polypeptide reads, in one-letter code: MIRVLLIDDHEMVRMGLAAFLEAQPDIEVIGEASDGSEGVRLAVELSPDVILMDLVMEGMDGIEATKQICRELSDPKIIVLTSFIDDDKVYPVIEAGALSYLLKTSKAAEIADAIRAASKGEPKLESKVAGKVLSRLRHSGENALPHESLTKRELEILCLIAEGKTNKEIGEELFITIKTVKTHITNILSKLDVSDRTQAAVYAHRNHLVN.

Residues 3-119 enclose the Response regulatory domain; sequence RVLLIDDHEM…EIADAIRAAS (117 aa). At aspartate 54 the chain carries 4-aspartylphosphate. One can recognise an HTH luxR-type domain in the interval 143 to 208; sequence NALPHESLTK…QAAVYAHRNH (66 aa). The H-T-H motif DNA-binding region spans 167–186; sequence NKEIGEELFITIKTVKTHIT.

Phosphorylated by LiaS.

Its subcellular location is the cytoplasm. Functionally, member of the two-component regulatory system LiaS/LiaR probably involved in response to a subset of cell wall-active antibiotics that interfere with the lipid II cycle in the cytoplasmic membrane (bacitracin, nisin, ramoplanin and vancomycin). Also seems to be involved in response to cationic antimicrobial peptides and secretion stress. LiaR regulates the transcription of the liaIHGFSR operon. In Bacillus subtilis (strain 168), this protein is Transcriptional regulatory protein LiaR (liaR).